The primary structure comprises 79 residues: MYDIVGTNNSILIANVLVLIIICLLVVIVGCALLLILQFVFGVCGFVFKFVCKPTILVYNKFRNESLLNEREELLCDNV.

The Virion surface segment spans residues methionine 1–valine 16. A helical transmembrane segment spans residues leucine 17–leucine 37. The Intravirion portion of the chain corresponds to glutamine 38 to leucine 75.

It belongs to the betacoronaviruses E protein family. As to quaternary structure, homopentamer. Interacts with membrane protein M in the budding compartment of the host cell, which is located between endoplasmic reticulum and the Golgi complex. Interacts with Nucleoprotein.

It localises to the host Golgi apparatus membrane. Plays a central role in virus morphogenesis and assembly. Acts as a viroporin and self-assembles in host membranes forming pentameric protein-lipid pores that allow ion transport. Also plays a role in the induction of apoptosis. The sequence is that of Envelope small membrane protein from Rousettus leschenaultii (Leschenault's rousette).